We begin with the raw amino-acid sequence, 474 residues long: Probable threonine--tRNA ligase, mitochondrial (474 aa).

The transit peptide at 1–27 directs the protein to the mitochondrion; that stretch reads MMKLKKFQLHTPFAHSCNRVEIYTARF.

This sequence belongs to the class-II aminoacyl-tRNA synthetase family.

The protein localises to the mitochondrion matrix. It carries out the reaction tRNA(Thr) + L-threonine + ATP = L-threonyl-tRNA(Thr) + AMP + diphosphate + H(+). The polypeptide is Probable threonine--tRNA ligase, mitochondrial (Schizosaccharomyces pombe (strain 972 / ATCC 24843) (Fission yeast)).